A 147-amino-acid polypeptide reads, in one-letter code: Small ribosomal subunit protein eS10B (147 aa).

The segment at 90 to 147 (THKRQVRPAAPRAGRPEPRERSSAADAGYRRAEKKDDGAAPGGFAPSFRGGFGRPVAA) is disordered. Basic and acidic residues predominate over residues 103–127 (GRPEPRERSSAADAGYRRAEKKDDG).

Belongs to the eukaryotic ribosomal protein eS10 family. As to quaternary structure, component of the small ribosomal subunit (SSU). Mature yeast ribosomes consist of a small (40S) and a large (60S) subunit. The 40S small subunit contains 1 molecule of ribosomal RNA (18S rRNA) and at least 33 different proteins. The large 60S subunit contains 3 rRNA molecules (25S, 5.8S and 5S rRNA) and at least 46 different proteins. eS10 interacts with GCN1 (via middle region); this interaction is direct and promotes GCN2 kinase activity.

Its subcellular location is the cytoplasm. Its function is as follows. Component of the ribosome, a large ribonucleoprotein complex responsible for the synthesis of proteins in the cell. The small ribosomal subunit (SSU) binds messenger RNAs (mRNAs) and translates the encoded message by selecting cognate aminoacyl-transfer RNA (tRNA) molecules. The large subunit (LSU) contains the ribosomal catalytic site termed the peptidyl transferase center (PTC), which catalyzes the formation of peptide bonds, thereby polymerizing the amino acids delivered by tRNAs into a polypeptide chain. The nascent polypeptides leave the ribosome through a tunnel in the LSU and interact with protein factors that function in enzymatic processing, targeting, and the membrane insertion of nascent chains at the exit of the ribosomal tunnel. eS10 plays a role as a positive regulator of the GCN2 kinase activity by stimulating GCN1-mediated GCN2 activation. This Schizosaccharomyces pombe (strain 972 / ATCC 24843) (Fission yeast) protein is Small ribosomal subunit protein eS10B (rps1002).